Reading from the N-terminus, the 240-residue chain is DNA repair protein RecO (240 aa).

Belongs to the RecO family.

Involved in DNA repair and RecF pathway recombination. This chain is DNA repair protein RecO, found in Actinobacillus pleuropneumoniae serotype 7 (strain AP76).